We begin with the raw amino-acid sequence, 90 residues long: MFEKKNRTCLTVYLHYNRDARKLSQYGDIVYHSKRLRYVLVYMDQELVEATILKLKKERFVKKVVPSYIKELDQNFVGNLWRDEEPSVVG.

It belongs to the UPF0298 family.

The protein localises to the cytoplasm. The polypeptide is UPF0298 protein SSU98_1559 (Streptococcus suis (strain 98HAH33)).